Consider the following 456-residue polypeptide: Acid sphingomyelinase-like phosphodiesterase 3b (456 aa).

The first 18 residues, 1–18, serve as a signal peptide directing secretion; the sequence is MTLLGWLIFLAPWGVAGA. The Zn(2+) site is built by D28 and H30. A glycan (N-linked (GlcNAc...) asparagine) is linked at N34. A disulfide bridge links C45 with C64. Residue N72 is glycosylated (N-linked (GlcNAc...) asparagine). Zn(2+) is bound at residue D93. An N-linked (GlcNAc...) asparagine glycan is attached at N100. Zn(2+) is bound at residue N134. N-linked (GlcNAc...) asparagine glycosylation is found at N164 and N223. The Zn(2+) site is built by H236, H277, and H279. Intrachain disulfides connect C405-C409 and C415-C428.

The protein belongs to the acid sphingomyelinase family. In terms of assembly, interacts with TLR4, TLR7, TLR8 and TLR9. Zn(2+) serves as cofactor. N-glycosylated. As to expression, macrophages and dendritic cells.

It is found in the secreted. The protein localises to the cell membrane. Its function is as follows. Lipid-modulating phosphodiesterase. Active on the surface of macrophages and dendritic cells and strongly influences macrophage lipid composition and membrane fluidity. Acts as a negative regulator of Toll-like receptor signaling. Has in vitro phosphodiesterase activity, but the physiological substrate is unknown. Lacks activity with phosphocholine-containing lipids, but can cleave CDP-choline, and can release phosphate from ATP and ADP (in vitro). The sequence is that of Acid sphingomyelinase-like phosphodiesterase 3b (Smpdl3b) from Mus musculus (Mouse).